Here is a 259-residue protein sequence, read N- to C-terminus: Ribosomal RNA small subunit methyltransferase A (259 aa).

6 residues coordinate S-adenosyl-L-methionine: Asn-13, Leu-15, Gly-40, Glu-61, Asp-85, and Asn-103.

Belongs to the class I-like SAM-binding methyltransferase superfamily. rRNA adenine N(6)-methyltransferase family. RsmA subfamily.

The protein resides in the cytoplasm. The enzyme catalyses adenosine(1518)/adenosine(1519) in 16S rRNA + 4 S-adenosyl-L-methionine = N(6)-dimethyladenosine(1518)/N(6)-dimethyladenosine(1519) in 16S rRNA + 4 S-adenosyl-L-homocysteine + 4 H(+). In terms of biological role, specifically dimethylates two adjacent adenosines (A1518 and A1519) in the loop of a conserved hairpin near the 3'-end of 16S rRNA in the 30S particle. May play a critical role in biogenesis of 30S subunits. This is Ribosomal RNA small subunit methyltransferase A from Neisseria meningitidis serogroup C / serotype 2a (strain ATCC 700532 / DSM 15464 / FAM18).